Here is a 415-residue protein sequence, read N- to C-terminus: Probable glucuronosyltransferase Os03g0287800 (415 aa).

The Cytoplasmic portion of the chain corresponds to 1-25 (MGSSTDHGGAGGRGKKGSGSQLWKK). Residues 26 to 43 (ALLHSSLCFVMGFFTGFA) traverse the membrane as a helical; Signal-anchor for type II membrane protein segment. Residues 44–415 (PSSVSDWTSA…GGRFLSGDFC (372 aa)) lie on the Lumenal side of the membrane. N-linked (GlcNAc...) asparagine glycans are attached at residues Asn-78, Asn-165, Asn-257, and Asn-287.

This sequence belongs to the glycosyltransferase 43 family.

The protein resides in the golgi apparatus membrane. Functionally, involved in the synthesis of glucuronoxylan hemicellulose in secondary cell walls. The sequence is that of Probable glucuronosyltransferase Os03g0287800 from Oryza sativa subsp. japonica (Rice).